The sequence spans 303 residues: Cysteine synthase B (303 aa).

The residue at position 41 (Lys-41) is an N6-(pyridoxal phosphate)lysine. Pyridoxal 5'-phosphate is bound by residues Asn-71, 174-178, and Ser-255; that span reads GTTGT.

It belongs to the cysteine synthase/cystathionine beta-synthase family. As to quaternary structure, homodimer. Pyridoxal 5'-phosphate serves as cofactor.

The catalysed reaction is O-acetyl-L-serine + hydrogen sulfide = L-cysteine + acetate. It participates in amino-acid biosynthesis; L-cysteine biosynthesis; L-cysteine from L-serine: step 2/2. In terms of biological role, two cysteine synthase enzymes are found. Both catalyze the same reaction. Cysteine synthase B can also use thiosulfate in place of sulfide to give cysteine thiosulfonate as a product. The protein is Cysteine synthase B (cysM) of Escherichia coli (strain K12).